Consider the following 178-residue polypeptide: Large ribosomal subunit protein uL6 (178 aa).

The protein belongs to the universal ribosomal protein uL6 family. As to quaternary structure, part of the 50S ribosomal subunit.

Functionally, this protein binds to the 23S rRNA, and is important in its secondary structure. It is located near the subunit interface in the base of the L7/L12 stalk, and near the tRNA binding site of the peptidyltransferase center. The sequence is that of Large ribosomal subunit protein uL6 from Francisella philomiragia subsp. philomiragia (strain ATCC 25017 / CCUG 19701 / FSC 153 / O#319-036).